A 116-amino-acid chain; its full sequence is Nucleoid-associated protein Tfu_0045 (116 aa).

Belongs to the YbaB/EbfC family. As to quaternary structure, homodimer.

The protein resides in the cytoplasm. It is found in the nucleoid. Binds to DNA and alters its conformation. May be involved in regulation of gene expression, nucleoid organization and DNA protection. The chain is Nucleoid-associated protein Tfu_0045 from Thermobifida fusca (strain YX).